The following is a 447-amino-acid chain: Phosphoglucosamine mutase (447 aa).

Residue serine 101 is the Phosphoserine intermediate of the active site. Mg(2+) contacts are provided by serine 101, aspartate 242, aspartate 244, and aspartate 246. Serine 101 bears the Phosphoserine mark.

This sequence belongs to the phosphohexose mutase family. Mg(2+) serves as cofactor. Post-translationally, activated by phosphorylation.

The enzyme catalyses alpha-D-glucosamine 1-phosphate = D-glucosamine 6-phosphate. Its function is as follows. Catalyzes the conversion of glucosamine-6-phosphate to glucosamine-1-phosphate. This is Phosphoglucosamine mutase from Bradyrhizobium diazoefficiens (strain JCM 10833 / BCRC 13528 / IAM 13628 / NBRC 14792 / USDA 110).